Reading from the N-terminus, the 519-residue chain is MKLTVWTYEGPPHVGAMRVATAMKGLHYVLHAPQGDTYADLLFTMIERRDHRPPVTYTTFEGRDLGEDTAGIFKVTCQEAYDRFKPQAIIVGASCTAELIQDDPGGLAETMQIPVPVIPLELPSYQRKENFGSDETFYQIVKSLARPMDRTPEVTVNIIGPLALGFRHRDDIEEVKGLLYEMGIGVNVVAPFDATPEDITRLGAAHANVLMYPEHAESAARHLERICGQPYTKTIPIGVAATHEFVAEVAQLCGVEPRKDLSRLRQPWWSKSVDSTYLTGKRVFLFGDATHVKAAARIARDEMGFEVVGLGCYNREFARSIRELAREFDVPALITDDYLEVEKAIEDASPEMILGTQMERHIGKRLGIPCAVISAPVHVQDFPARYSPQMGWEGANVIFDTWIHPLVMGLEEHLLSMFREDFEFHDEAGPSHHGGHSPKPSEAARTPDKVEERADPAPEAPQTGSDVMVWLSEAEKELKKIPFFVRGKARRNTEKFAADQGLQEISLDTLYEAKAHYAR.

Position 36 (D36) interacts with [4Fe-4S] cluster. D274 functions as the Proton donor in the catalytic mechanism. Position 409–410 (409–410 (GL)) interacts with substrate. Residues 426 to 465 (DEAGPSHHGGHSPKPSEAARTPDKVEERADPAPEAPQTGS) are disordered. Basic and acidic residues predominate over residues 445 to 456 (RTPDKVEERADP).

Belongs to the ChlB/BchB/BchZ family. Protochlorophyllide reductase is composed of three subunits; BchL, BchN and BchB. Forms a heterotetramer of two BchB and two BchN subunits. It depends on [4Fe-4S] cluster as a cofactor.

The catalysed reaction is chlorophyllide a + oxidized 2[4Fe-4S]-[ferredoxin] + 2 ADP + 2 phosphate = protochlorophyllide a + reduced 2[4Fe-4S]-[ferredoxin] + 2 ATP + 2 H2O. It functions in the pathway porphyrin-containing compound metabolism; bacteriochlorophyll biosynthesis (light-independent). Component of the dark-operative protochlorophyllide reductase (DPOR) that uses Mg-ATP and reduced ferredoxin to reduce ring D of protochlorophyllide (Pchlide) to form chlorophyllide a (Chlide). This reaction is light-independent. The NB-protein (BchN-BchB) is the catalytic component of the complex. The chain is Light-independent protochlorophyllide reductase subunit B from Jannaschia sp. (strain CCS1).